The chain runs to 473 residues: Photosystem II CP43 reaction center protein (473 aa).

A propeptide spanning residues 1–14 (MKTLYSLRRYFHVE) is cleaved from the precursor. T15 carries the post-translational modification N-acetylthreonine. T15 is subject to Phosphothreonine. Helical transmembrane passes span 69 to 93 (LFEVAHFVPEKPMYEQGLILLPHLA), 134 to 155 (LIGPETLEESYPFFGYLWKDKN), 178 to 200 (KAMYFGGVYDTWAPGGGDVRVIS), 255 to 275 (KPFAWARRAFVWSGEAYLSYS), and 291 to 312 (WFNNTVYPSEFFGPTGPEASQA). E367 serves as a coordination point for [CaMn4O5] cluster. A helical membrane pass occupies residues 447–471 (RARAAAAGFEKGIDRDTEPVLSMRP).

Belongs to the PsbB/PsbC family. PsbC subfamily. In terms of assembly, PSII is composed of 1 copy each of membrane proteins PsbA, PsbB, PsbC, PsbD, PsbE, PsbF, PsbH, PsbI, PsbJ, PsbK, PsbL, PsbM, PsbT, PsbX, PsbY, PsbZ, Psb30/Ycf12, at least 3 peripheral proteins of the oxygen-evolving complex and a large number of cofactors. It forms dimeric complexes. It depends on Binds multiple chlorophylls and provides some of the ligands for the Ca-4Mn-5O cluster of the oxygen-evolving complex. It may also provide a ligand for a Cl- that is required for oxygen evolution. PSII binds additional chlorophylls, carotenoids and specific lipids. as a cofactor.

It localises to the plastid. It is found in the chloroplast thylakoid membrane. One of the components of the core complex of photosystem II (PSII). It binds chlorophyll and helps catalyze the primary light-induced photochemical processes of PSII. PSII is a light-driven water:plastoquinone oxidoreductase, using light energy to abstract electrons from H(2)O, generating O(2) and a proton gradient subsequently used for ATP formation. The chain is Photosystem II CP43 reaction center protein from Ostreococcus tauri.